The chain runs to 429 residues: Glutamate-1-semialdehyde 2,1-aminomutase 2 (429 aa).

N6-(pyridoxal phosphate)lysine is present on K268.

The protein belongs to the class-III pyridoxal-phosphate-dependent aminotransferase family. HemL subfamily. As to quaternary structure, homodimer. Pyridoxal 5'-phosphate is required as a cofactor.

It is found in the cytoplasm. The catalysed reaction is (S)-4-amino-5-oxopentanoate = 5-aminolevulinate. It functions in the pathway porphyrin-containing compound metabolism; protoporphyrin-IX biosynthesis; 5-aminolevulinate from L-glutamyl-tRNA(Glu): step 2/2. The protein is Glutamate-1-semialdehyde 2,1-aminomutase 2 of Bacillus thuringiensis (strain Al Hakam).